The following is a 235-amino-acid chain: Ion-translocating oxidoreductase complex subunit E (235 aa).

5 consecutive transmembrane segments (helical) span residues 63–83 (LGLS…ISLF), 93–113 (IPIY…LMNA), 117–137 (TLYQ…IIIG), 152–172 (IWDG…LGAL), and 206–226 (SFLL…LLAI).

The protein belongs to the NqrDE/RnfAE family. As to quaternary structure, the complex is composed of six subunits: RnfA, RnfB, RnfC, RnfD, RnfE and RnfG.

The protein localises to the cell inner membrane. Part of a membrane-bound complex that couples electron transfer with translocation of ions across the membrane. This is Ion-translocating oxidoreductase complex subunit E from Haemophilus influenzae (strain PittEE).